A 510-amino-acid polypeptide reads, in one-letter code: JmjC domain-containing histone demethylation protein 1 (510 aa).

The segment at 2–53 (PNRCDFCTSSSTKDKQQWTQCDGCDRWVHDVCVSITDPVSYAKYHCPTCTKT) adopts a PHD-type zinc-finger fold. The 150-residue stretch at 216–365 (TLVRELDLVD…TQIDIAGIEV (150 aa)) folds into the JmjC domain. Substrate is bound at residue threonine 255. Positions 258 and 260 each coordinate Fe cation. Lysine 275 contributes to the substrate binding site. Histidine 333 contributes to the Fe cation binding site. The segment at 475–510 (KGESKEKHKIESQLPEEKILQGSKLESKEEVQTENF) is disordered. Residues 477–510 (ESKEKHKIESQLPEEKILQGSKLESKEEVQTENF) show a composition bias toward basic and acidic residues.

It belongs to the JHDM1 histone demethylase family. It depends on Fe(2+) as a cofactor.

Its subcellular location is the nucleus. It carries out the reaction N(6),N(6)-dimethyl-L-lysyl(36)-[histone H3] + 2 2-oxoglutarate + 2 O2 = L-lysyl(36)-[histone H3] + 2 formaldehyde + 2 succinate + 2 CO2. In terms of biological role, histone demethylase that specifically demethylates 'Lys-36' of histone H3, thereby playing a central role in histone code. This is JmjC domain-containing histone demethylation protein 1 (JHD1) from Yarrowia lipolytica (strain CLIB 122 / E 150) (Yeast).